A 261-amino-acid chain; its full sequence is 3-methyl-2-oxobutanoate hydroxymethyltransferase (261 aa).

Residues Asp42 and Asp81 each contribute to the Mg(2+) site. 3-methyl-2-oxobutanoate-binding positions include 42 to 43 (DS), Asp81, and Lys110. Glu112 provides a ligand contact to Mg(2+). The Proton acceptor role is filled by Glu179.

The protein belongs to the PanB family. In terms of assembly, homodecamer; pentamer of dimers. Mg(2+) serves as cofactor.

The protein resides in the cytoplasm. It catalyses the reaction 3-methyl-2-oxobutanoate + (6R)-5,10-methylene-5,6,7,8-tetrahydrofolate + H2O = 2-dehydropantoate + (6S)-5,6,7,8-tetrahydrofolate. It functions in the pathway cofactor biosynthesis; (R)-pantothenate biosynthesis; (R)-pantoate from 3-methyl-2-oxobutanoate: step 1/2. Functionally, catalyzes the reversible reaction in which hydroxymethyl group from 5,10-methylenetetrahydrofolate is transferred onto alpha-ketoisovalerate to form ketopantoate. The polypeptide is 3-methyl-2-oxobutanoate hydroxymethyltransferase (Thermus thermophilus (strain ATCC 27634 / DSM 579 / HB8)).